We begin with the raw amino-acid sequence, 438 residues long: Gamma-glutamyl phosphate reductase (438 aa).

It belongs to the gamma-glutamyl phosphate reductase family.

Its subcellular location is the cytoplasm. It catalyses the reaction L-glutamate 5-semialdehyde + phosphate + NADP(+) = L-glutamyl 5-phosphate + NADPH + H(+). The protein operates within amino-acid biosynthesis; L-proline biosynthesis; L-glutamate 5-semialdehyde from L-glutamate: step 2/2. Its function is as follows. Catalyzes the NADPH-dependent reduction of L-glutamate 5-phosphate into L-glutamate 5-semialdehyde and phosphate. The product spontaneously undergoes cyclization to form 1-pyrroline-5-carboxylate. This Prochlorococcus marinus (strain NATL2A) protein is Gamma-glutamyl phosphate reductase.